We begin with the raw amino-acid sequence, 880 residues long: Potassium/sodium hyperpolarization-activated cyclic nucleotide-gated channel 1 (880 aa).

The tract at residues 1–80 (MEGGGKPNSS…SAGGLEDAEG (80 aa)) is disordered. The Cytoplasmic portion of the chain corresponds to 1 to 136 (MEGGGKPNSS…WIIHSYSDFR (136 aa)). Over residues 8–34 (NSSSNSRDDGNSVFPAKAPATGAGPAA) the composition is skewed to low complexity. A compositionally biased stretch (gly residues) spans 62–71 (DGGGGGGEES). A helical membrane pass occupies residues 137-158 (FYWDLIMLIMMVGNLVIIPVGI). The Extracellular portion of the chain corresponds to 159 to 167 (TFFTEQTTT). Residues 168–188 (PWIIFNVASDTVFLLDLIMNF) form a helical membrane-spanning segment. The Cytoplasmic segment spans residues 189-209 (RTGTVNEDSSEIILDPKVIKM). A helical membrane pass occupies residues 210–230 (NYLKSWFVVDFISSIPVDYIF). Over 231–254 (LIVEKGMDSEVYKTARALRIVRFT) the chain is Extracellular. The chain crosses the membrane as a helical; Voltage-sensor span at residues 255-275 (KILSLLRLLRLSRLIRYIHQW). Over 276–289 (EEIFHMTYDLASAV) the chain is Cytoplasmic. A helical membrane pass occupies residues 290-312 (VRIFNLIGMMLLLCHWDGCLQFL). The Extracellular portion of the chain corresponds to 313-338 (VPLLQDFPPDCWVSLNEMVNDSWGKQ). The N-linked (GlcNAc...) asparagine glycan is linked to Asn-332. An intramembrane region (pore-forming) is located at residues 339–360 (YSYALFKAMSHMLCIGYGAQAP). The Selectivity filter signature appears at 352-356 (CIGYG). At 361–365 (VSMSD) the chain is on the extracellular side. The helical transmembrane segment at 366–386 (LWITMLSMIVGATCYAMFVGH) threads the bilayer. At 387-880 (ATALIQSLDS…AEKPRFASNL (494 aa)) the chain is on the cytoplasmic side. 7 residues coordinate 3',5'-cyclic AMP: Gly-533, Glu-534, Cys-536, Arg-543, Thr-544, Arg-584, and Arg-587. Over residues 641–664 (LNSTSSTATPTSRMRTQSPPVYTA) the composition is skewed to polar residues. Disordered regions lie at residues 641-686 (LNST…QPSA), 718-786 (ASQL…LPHE), and 835-880 (MSSG…ASNL). Composition is skewed to low complexity over residues 665 to 685 (TSLS…PQPS) and 725 to 738 (PQQQ…QTQP). The segment covering 760–770 (STQALPNTSLT) has biased composition (polar residues). Residues 844 to 855 (RGVPPAPPPPAA) show a composition bias toward pro residues. Basic and acidic residues predominate over residues 870–880 (EAEKPRFASNL).

It belongs to the potassium channel HCN family. Homotetramer. Heterotetramer with HCN2. The potassium channel is composed of a homo- or heterotetrameric complex of pore-forming subunits. Interacts with KCNE2. Interacts with the SH3 domain of CSK. In terms of tissue distribution, detected in myocytes in heart sinoatrial node (SAN) and in brain, in particular in the granule cell layer and in Purkinje neuron bodies in the cerebellum.

The protein resides in the cell membrane. The enzyme catalyses Na(+)(in) = Na(+)(out). It carries out the reaction K(+)(in) = K(+)(out). Activated by cAMP. cAMP binding promotes tetramerization and formation of an active channel. Compared to other family members, cAMP has less stimulatory effect on HCN1 because part of the molecules already contain bound cAMP and form homotetramers when cAMP levels are low, this inherent tetramerization in HCN1 results in a weaker response to increased cAMP. In terms of biological role, hyperpolarization-activated ion channel that are permeable to sodium and potassium ions. Exhibits weak selectivity for potassium over sodium ions. Contributes to the native pacemaker currents in heart (If) and in neurons (Ih). Participates in cerebellar mechanisms of motor learning. May mediate responses to sour stimuli. This is Potassium/sodium hyperpolarization-activated cyclic nucleotide-gated channel 1 (HCN1) from Oryctolagus cuniculus (Rabbit).